A 312-amino-acid chain; its full sequence is Porphobilinogen deaminase (312 aa).

Residue Cys241 is modified to S-(dipyrrolylmethanemethyl)cysteine.

It belongs to the HMBS family. As to quaternary structure, monomer. Dipyrromethane serves as cofactor.

The catalysed reaction is 4 porphobilinogen + H2O = hydroxymethylbilane + 4 NH4(+). Its pathway is porphyrin-containing compound metabolism; protoporphyrin-IX biosynthesis; coproporphyrinogen-III from 5-aminolevulinate: step 2/4. Functionally, tetrapolymerization of the monopyrrole PBG into the hydroxymethylbilane pre-uroporphyrinogen in several discrete steps. The sequence is that of Porphobilinogen deaminase from Cytophaga hutchinsonii (strain ATCC 33406 / DSM 1761 / CIP 103989 / NBRC 15051 / NCIMB 9469 / D465).